Here is a 328-residue protein sequence, read N- to C-terminus: Cytochrome c biogenesis protein CcsA (328 aa).

The next 8 helical transmembrane spans lie at 13–33 (ISFS…LVNL), 46–66 (GIII…IFSG), 73–93 (LYES…VSYF), 101–121 (LNAI…SGLL), 146–166 (MILG…LLVI), 234–254 (IISL…VWAN), 263–283 (WDPK…YLHI), and 295–315 (AIVA…VNLL).

It belongs to the CcmF/CycK/Ccl1/NrfE/CcsA family. In terms of assembly, may interact with Ccs1.

It localises to the plastid. Its subcellular location is the chloroplast thylakoid membrane. Its function is as follows. Required during biogenesis of c-type cytochromes (cytochrome c6 and cytochrome f) at the step of heme attachment. The sequence is that of Cytochrome c biogenesis protein CcsA from Olimarabidopsis pumila (Dwarf rocket).